The sequence spans 137 residues: Basic phospholipase A2 beta-bungarotoxin A1 chain (137 aa).

The signal sequence occupies residues 1–9; sequence AVCVSLLGA. The propeptide occupies 10–17; it reads ANIPPHPL. Intrachain disulfides connect Cys-44-Cys-136, Cys-46-Cys-62, Cys-61-Cys-117, Cys-68-Cys-110, Cys-78-Cys-103, and Cys-96-Cys-108. The Ca(2+) site is built by Tyr-45, Gly-47, and Gly-49. The active site involves His-65. Asp-66 contributes to the Ca(2+) binding site. Asp-111 is a catalytic residue.

This sequence belongs to the phospholipase A2 family. Group I subfamily. D49 sub-subfamily. As to quaternary structure, heterodimer; disulfide-linked. The A chain has phospholipase A2 activity and the B chain shows homology with the basic protease inhibitors. Requires Ca(2+) as cofactor. In terms of tissue distribution, expressed by the venom gland.

It localises to the secreted. The enzyme catalyses a 1,2-diacyl-sn-glycero-3-phosphocholine + H2O = a 1-acyl-sn-glycero-3-phosphocholine + a fatty acid + H(+). Its function is as follows. Snake venom phospholipase A2 (PLA2) that shows presynaptic neurotoxicity. The A chain has phospholipase activity. PLA2 catalyzes the calcium-dependent hydrolysis of the 2-acyl groups in 3-sn-phosphoglycerides. This Bungarus candidus (Malayan krait) protein is Basic phospholipase A2 beta-bungarotoxin A1 chain.